The following is a 270-amino-acid chain: Mlc titration factor A (270 aa).

H111, H148, H152, and E211 together coordinate Zn(2+).

The protein belongs to the MtfA family. As to quaternary structure, interacts with Mlc. Requires Zn(2+) as cofactor.

The protein localises to the cytoplasm. Involved in the modulation of the activity of the glucose-phosphotransferase system (glucose-PTS). Interacts with the transcriptional repressor Mlc, preventing its interaction with DNA and leading to the modulation of expression of genes regulated by Mlc, including ptsG, which encodes the PTS system glucose-specific EIICB component. Its function is as follows. Shows zinc-dependent metallopeptidase activity. The protein is Mlc titration factor A of Yersinia pestis bv. Antiqua (strain Nepal516).